Consider the following 291-residue polypeptide: Protease HtpX homolog (291 aa).

The next 2 membrane-spanning stretches (helical) occupy residues I11–A31 and F34–Q54. H140 is a Zn(2+) binding site. The active site involves E141. H144 is a Zn(2+) binding site. A run of 2 helical transmembrane segments spans residues I155–I175 and A186–V206. E215 contributes to the Zn(2+) binding site.

Belongs to the peptidase M48B family. Requires Zn(2+) as cofactor.

It localises to the cell membrane. This is Protease HtpX homolog from Tropheryma whipplei (strain Twist) (Whipple's bacillus).